A 513-amino-acid polypeptide reads, in one-letter code: 2-isopropylmalate synthase (513 aa).

Residues 5–267 (LVIFDTTLRD…ETRIDTTQIV (263 aa)) enclose the Pyruvate carboxyltransferase domain. Residues Asp14, His202, His204, and Asn238 each contribute to the Mn(2+) site. The segment at 393 to 513 (KLVYSRVCSE…LDKVKAQGGV (121 aa)) is regulatory domain.

Belongs to the alpha-IPM synthase/homocitrate synthase family. LeuA type 1 subfamily. Homodimer. It depends on Mn(2+) as a cofactor.

The protein localises to the cytoplasm. The catalysed reaction is 3-methyl-2-oxobutanoate + acetyl-CoA + H2O = (2S)-2-isopropylmalate + CoA + H(+). The protein operates within amino-acid biosynthesis; L-leucine biosynthesis; L-leucine from 3-methyl-2-oxobutanoate: step 1/4. Functionally, catalyzes the condensation of the acetyl group of acetyl-CoA with 3-methyl-2-oxobutanoate (2-ketoisovalerate) to form 3-carboxy-3-hydroxy-4-methylpentanoate (2-isopropylmalate). In Dechloromonas aromatica (strain RCB), this protein is 2-isopropylmalate synthase.